A 248-amino-acid chain; its full sequence is UPF0736 protein BT9727_1080 (248 aa).

Belongs to the UPF0736 family.

This chain is UPF0736 protein BT9727_1080, found in Bacillus thuringiensis subsp. konkukian (strain 97-27).